Consider the following 503-residue polypeptide: ATP synthase subunit beta (503 aa).

157-164 (GGAGVGKT) lines the ATP pocket.

The protein belongs to the ATPase alpha/beta chains family. In terms of assembly, F-type ATPases have 2 components, CF(1) - the catalytic core - and CF(0) - the membrane proton channel. CF(1) has five subunits: alpha(3), beta(3), gamma(1), delta(1), epsilon(1). CF(0) has three main subunits: a(1), b(2) and c(9-12). The alpha and beta chains form an alternating ring which encloses part of the gamma chain. CF(1) is attached to CF(0) by a central stalk formed by the gamma and epsilon chains, while a peripheral stalk is formed by the delta and b chains.

The protein localises to the cell inner membrane. It carries out the reaction ATP + H2O + 4 H(+)(in) = ADP + phosphate + 5 H(+)(out). Produces ATP from ADP in the presence of a proton gradient across the membrane. The catalytic sites are hosted primarily by the beta subunits. This Flavobacterium psychrophilum (strain ATCC 49511 / DSM 21280 / CIP 103535 / JIP02/86) protein is ATP synthase subunit beta.